A 397-amino-acid chain; its full sequence is Ribosomal RNA large subunit methyltransferase I (397 aa).

Residues 2–78 form the PUA domain; sequence TPAIYLVKGR…EQEPIDRDFF (77 aa).

This sequence belongs to the methyltransferase superfamily. RlmI family.

Its subcellular location is the cytoplasm. It catalyses the reaction cytidine(1962) in 23S rRNA + S-adenosyl-L-methionine = 5-methylcytidine(1962) in 23S rRNA + S-adenosyl-L-homocysteine + H(+). Functionally, specifically methylates the cytosine at position 1962 (m5C1962) of 23S rRNA. This chain is Ribosomal RNA large subunit methyltransferase I, found in Vibrio cholerae serotype O1 (strain ATCC 39541 / Classical Ogawa 395 / O395).